The chain runs to 412 residues: Ribosomal RNA large subunit methyltransferase G (412 aa).

The disordered stretch occupies residues 386-412; sequence KAEPHENGESSSDTPNPQSSLYGGVKR. Positions 394 to 406 are enriched in polar residues; that stretch reads ESSSDTPNPQSSL.

This sequence belongs to the methyltransferase superfamily. RlmG family.

The protein localises to the cytoplasm. It carries out the reaction guanosine(1835) in 23S rRNA + S-adenosyl-L-methionine = N(2)-methylguanosine(1835) in 23S rRNA + S-adenosyl-L-homocysteine + H(+). Its function is as follows. Specifically methylates the guanine in position 1835 (m2G1835) of 23S rRNA. The protein is Ribosomal RNA large subunit methyltransferase G of Shewanella sediminis (strain HAW-EB3).